The sequence spans 202 residues: Large ribosomal subunit protein bL25 (202 aa).

It belongs to the bacterial ribosomal protein bL25 family. CTC subfamily. Part of the 50S ribosomal subunit; part of the 5S rRNA/L5/L18/L25 subcomplex. Contacts the 5S rRNA. Binds to the 5S rRNA independently of L5 and L18.

In terms of biological role, this is one of the proteins that binds to the 5S RNA in the ribosome where it forms part of the central protuberance. This Nitrosomonas eutropha (strain DSM 101675 / C91 / Nm57) protein is Large ribosomal subunit protein bL25.